The chain runs to 238 residues: Ankyrin repeat domain-containing protein 49 (238 aa).

Serine 48 carries the post-translational modification Phosphoserine. ANK repeat units lie at residues leucine 77–glutamate 105, aspartate 106–alanine 135, aspartate 139–alanine 168, and glycine 172–asparagine 205.

Its subcellular location is the nucleus. Its function is as follows. May have a role in spermatogenesis where it promotes autophagy in response to serum starvation, via the NF-kappaB pathway. This is Ankyrin repeat domain-containing protein 49 (ANKRD49) from Bos taurus (Bovine).